The following is a 79-amino-acid chain: Panulirin (79 aa).

Positions 1-22 (MKNKAVLMLMALFLVAVTQVHG) are cleaved as a signal peptide. Residues 23–26 (DPEP) constitute a propeptide that is removed on maturation. Intrachain disulfides connect Cys-33–Cys-63, Cys-40–Cys-56, and Cys-46–Cys-64. Positions 75–79 (QLLAA) are excised as a propeptide.

As to quaternary structure, monomer. Post-translationally, contains 3 disulfide bonds. Expressed in hemocytes (at protein level).

Its function is as follows. Involved in the melanization cascade in response to lipopolysaccharide (LPS). In vitro, reversibly and competitively inhibits trypsin (Ki=8.6 nM) but not serine proteases chymotrypsin, elastase, subtilisin, thrombin and plasmin, cysteine peptidase papain or metallopeptidase carboxypeptidase A. The protein is Panulirin of Panulirus argus (Caribbean spiny lobster).